A 1402-amino-acid chain; its full sequence is Eukaryotic translation initiation factor 4 gamma 1 (1402 aa).

Disordered stretches follow at residues 1–123 (MSGA…SPEP) and 165–402 (HEPN…YEYK). Phosphothreonine is present on residues Thr-11 and Thr-27. A compositionally biased stretch (low complexity) spans 53–64 (GPEHSPSESQPS). The segment covering 65–76 (SPSPTPSPPPIL) has biased composition (pro residues). The residue at position 120 (Ser-120) is a Phosphoserine. The span at 238–251 (ASATPPAVPSATPA) shows a compositional bias: low complexity. Positions 261 to 275 (QEEEGEEEEEEEEGE) are enriched in acidic residues. Composition is skewed to basic and acidic residues over residues 280–290 (ESDKGGEDLHP) and 324–340 (KELNKKEAVGDLLDAFK). Positions 359-370 (PTPESEGSSGPS) are enriched in low complexity. Over residues 379-388 (WDAKEDKIHN) the composition is skewed to basic and acidic residues. Thr-452 bears the Phosphothreonine mark. Disordered regions lie at residues 476-517 (ANLG…PPKG), 536-563 (AEKAWKPSSKRTAADKDRGEEDADGSKT), 600-636 (SKGSLTSSLRRPFQNPTSQWPSQHVPLPHGAESATTE), and 828-1028 (MAKG…KREA). Low complexity predominate over residues 479-488 (GRPALSSRGP). Residues Arg-490 and Arg-499 each carry the omega-N-methylarginine modification. Positions 547–563 (TAADKDRGEEDADGSKT) are enriched in basic and acidic residues. In terms of domain architecture, MIF4G spans 567–793 (FRRVRSILNK…QDVLDLRQSN (227 aa)). Polar residues predominate over residues 602-621 (GSLTSSLRRPFQNPTSQWPS). The residue at position 832 (Ser-832) is a Phosphoserine. An omega-N-methylarginine mark is found at Arg-836 and Arg-846. 2 positions are modified to phosphoserine: Ser-881 and Ser-896. A compositionally biased stretch (low complexity) spans 892–913 (GGRLSWGKGSSGSGAKPSDAAS). At Lys-899 the chain carries N6-acetyllysine. Over residues 918 to 937 (PATSTLNRFSALQQAVPTES) the composition is skewed to polar residues. Phosphoserine is present on residues Ser-948 and Ser-950. The segment covering 949–981 (LSRERGGKAGEPRRRLERSERGGDRGDRLDRAR) has biased composition (basic and acidic residues). Ser-988 is modified (phosphoserine; by PKC/PRKCA). The span at 989 to 1028 (FSKEVEERSRERPSQPEGLRKAASLTEDRDRGRDAAKREA) shows a compositional bias: basic and acidic residues. Phosphoserine is present on residues Ser-990, Ser-997, and Ser-1012. Thr-1014 bears the Phosphothreonine mark. A phosphoserine mark is found at Ser-1034 and Ser-1041. An MI domain is found at 1044 to 1166 (ELEKKSKAII…PMGELFREIT (123 aa)). A W2 domain is found at 1231–1401 (EESEAPGQRA…REVEEEESDH (171 aa)). Ser-1399 carries the phosphoserine modification.

Belongs to the eukaryotic initiation factor 4G family. EIF4F is a multi-subunit complex, the composition of which varies with external and internal environmental conditions. It is composed of at least EIF4A, EIF4E (cap-binding) and EIF4G1/EIF4G3. Interacts with eIF3 complex, mutually exclusive with EIF4A1 or EIF4A2, EIF4E and through its N-terminus with PABPC1. Interacts with EIF4E or with EIF1 (mutually exclusive) through a common binding site. Interacts through its C-terminus with the serine/threonine kinases MKNK1, and with MKNK2. Appears to act as a scaffold protein, holding these enzymes in place to phosphorylate EIF4E. Non-phosphorylated EIF4EBP1 competes with EIF4G1/EIF4G3 to interact with EIF4E; insulin stimulated MAP-kinase (MAPK1 and MAPK3) phosphorylation of EIF4EBP1 causes dissociation of the complex allowing EIF4G1/EIF4G3 to bind and consequent initiation of translation. EIF4G1/EIF4G3 interacts with PABPC1 to bring about circularization of the mRNA. Interacts with EIF4E3. Interacts with CIRBP and MIF4GD. Interacts with RBM4. Interacts with HNRNPD/AUF1; the interaction requires RNA. Interacts with DDX3X; the interaction requires RNA. Interacts with DAZAP2. Phosphorylated at multiple sites in vivo. Phosphorylation at Ser-988 by PRKCA induces binding to MKNK1.

It is found in the cytoplasm. Its subcellular location is the nucleus. The protein localises to the stress granule. Its function is as follows. Component of the protein complex eIF4F, which is involved in the recognition of the mRNA cap, ATP-dependent unwinding of 5'-terminal secondary structure and recruitment of mRNA to the ribosome. Exists in two complexes, either with EIF1 or with EIF4E (mutually exclusive). Together with EIF1, is required for leaky scanning, in particular for avoiding cap-proximal start codon. Together with EIF4E, antagonizes the scanning promoted by EIF1-EIF4G1 and locates the start codon (through a TISU element) without scanning. As a member of the eIF4F complex, required for endoplasmic reticulum stress-induced ATF4 mRNA translation. The chain is Eukaryotic translation initiation factor 4 gamma 1 (EIF4G1) from Oryctolagus cuniculus (Rabbit).